The sequence spans 312 residues: MDQKNGSSFTGFILLGFSDRPQLELVLFVVLLIFYIFTLLGNKTIIVLSHLDPHLHTPMYFFFSNLSFLDLCYTTGIVPQLLVNLRGADKSISYGGCVVQLYISLGLGSTECVLLGVMVFDRYAAVCRPLHYTVVMHPCLYVLMASTSWVIGFANSLLQTVLILLLTLCGRNKLEHFLCEVPPLLKLACVDTTMNESELFFVSVIILLVPVALIIFSYSQIVRAVMRIKLATGQRKVFGTCGSHLTVVSLFYGTAIYAYLQPGNNYSQDQGKFISLFYTIITPMINPLIYTLRNKDVKGALKKVLWKNYDSR.

Residues 1–25 (MDQKNGSSFTGFILLGFSDRPQLEL) lie on the Extracellular side of the membrane. Asn-5 carries N-linked (GlcNAc...) asparagine glycosylation. A helical transmembrane segment spans residues 26-49 (VLFVVLLIFYIFTLLGNKTIIVLS). At 50 to 57 (HLDPHLHT) the chain is on the cytoplasmic side. Residues 58–79 (PMYFFFSNLSFLDLCYTTGIVP) form a helical membrane-spanning segment. At 80–100 (QLLVNLRGADKSISYGGCVVQ) the chain is on the extracellular side. A disulfide bridge connects residues Cys-97 and Cys-189. A helical membrane pass occupies residues 101-120 (LYISLGLGSTECVLLGVMVF). Over 121 to 139 (DRYAAVCRPLHYTVVMHPC) the chain is Cytoplasmic. The helical transmembrane segment at 140–158 (LYVLMASTSWVIGFANSLL) threads the bilayer. Topologically, residues 159-195 (QTVLILLLTLCGRNKLEHFLCEVPPLLKLACVDTTMN) are extracellular. Asn-195 carries N-linked (GlcNAc...) asparagine glycosylation. A helical membrane pass occupies residues 196–219 (ESELFFVSVIILLVPVALIIFSYS). Residues 220 to 236 (QIVRAVMRIKLATGQRK) lie on the Cytoplasmic side of the membrane. The chain crosses the membrane as a helical span at residues 237 to 259 (VFGTCGSHLTVVSLFYGTAIYAY). The Extracellular portion of the chain corresponds to 260–272 (LQPGNNYSQDQGK). Residue Asn-265 is glycosylated (N-linked (GlcNAc...) asparagine). The chain crosses the membrane as a helical span at residues 273–292 (FISLFYTIITPMINPLIYTL). Residues 293–312 (RNKDVKGALKKVLWKNYDSR) lie on the Cytoplasmic side of the membrane.

The protein belongs to the G-protein coupled receptor 1 family.

The protein resides in the cell membrane. Functionally, odorant receptor. The sequence is that of Olfactory receptor 2B8 from Homo sapiens (Human).